The following is a 437-amino-acid chain: Homogentisate 1,2-dioxygenase (437 aa).

Positions 15–34 (NEHATSDPRVPDALPVGQNS) are disordered. 3 residues coordinate Fe cation: H336, E342, and H372.

It belongs to the homogentisate dioxygenase family. It depends on Fe cation as a cofactor. In terms of tissue distribution, expressed in the hypodermis and intestine.

The catalysed reaction is homogentisate + O2 = 4-maleylacetoacetate + H(+). It functions in the pathway amino-acid degradation; L-phenylalanine degradation; acetoacetate and fumarate from L-phenylalanine: step 4/6. Plays a role in the tyrosine degradation pathway. The chain is Homogentisate 1,2-dioxygenase from Caenorhabditis elegans.